The sequence spans 72 residues: Omega-conotoxin-like SVIA mutant 1 (72 aa).

The signal sequence occupies residues 1–22 (MKLTCVVIVAVLLLTACQLITA). Positions 23-48 (EDSRGAQKHRTLRSTARRSKSELTTR) are excised as a propeptide. Disulfide bonds link C49-C63, C56-C66, and C62-C71. 4-hydroxyproline is present on P55.

Belongs to the conotoxin O1 superfamily. In terms of tissue distribution, expressed by the venom duct.

It is found in the secreted. Omega-conotoxins act at presynaptic membranes, they bind and block voltage-gated calcium channels (Cav). The protein is Omega-conotoxin-like SVIA mutant 1 of Conus striatus (Striated cone).